The primary structure comprises 258 residues: Indole-3-glycerol phosphate synthase (258 aa).

Belongs to the TrpC family.

The enzyme catalyses 1-(2-carboxyphenylamino)-1-deoxy-D-ribulose 5-phosphate + H(+) = (1S,2R)-1-C-(indol-3-yl)glycerol 3-phosphate + CO2 + H2O. It functions in the pathway amino-acid biosynthesis; L-tryptophan biosynthesis; L-tryptophan from chorismate: step 4/5. This chain is Indole-3-glycerol phosphate synthase, found in Campylobacter fetus subsp. fetus (strain 82-40).